The chain runs to 916 residues: Isoleucine--tRNA ligase (916 aa).

A 'HIGH' region motif is present at residues proline 57 to histidine 67. Residue glutamate 554 participates in L-isoleucyl-5'-AMP binding. The 'KMSKS' region motif lies at lysine 595–serine 599. Lysine 598 is a binding site for ATP. Zn(2+)-binding residues include cysteine 885, cysteine 888, cysteine 905, and cysteine 908.

The protein belongs to the class-I aminoacyl-tRNA synthetase family. IleS type 1 subfamily. As to quaternary structure, monomer. Requires Zn(2+) as cofactor.

The protein localises to the cytoplasm. The enzyme catalyses tRNA(Ile) + L-isoleucine + ATP = L-isoleucyl-tRNA(Ile) + AMP + diphosphate. In terms of biological role, catalyzes the attachment of isoleucine to tRNA(Ile). As IleRS can inadvertently accommodate and process structurally similar amino acids such as valine, to avoid such errors it has two additional distinct tRNA(Ile)-dependent editing activities. One activity is designated as 'pretransfer' editing and involves the hydrolysis of activated Val-AMP. The other activity is designated 'posttransfer' editing and involves deacylation of mischarged Val-tRNA(Ile). The chain is Isoleucine--tRNA ligase from Staphylococcus saprophyticus subsp. saprophyticus (strain ATCC 15305 / DSM 20229 / NCIMB 8711 / NCTC 7292 / S-41).